The sequence spans 464 residues: MSTTTTSSKPEFPADAATKEYAASLDASDPLAGFREKFIIPSKANIASKKLAKPGLSSEPCIYFCGNSLGIQPKATAKYLEAQLDTWSSIGVSGHFTNVEDSPLREWQNLAEQAAESMSRVVGAAPEEVAAMGTLTMNLHLLLASFYRPTATKHKILMDWKAFPSDHYAIESHIAWHDLDPKESMVLIGPDEGTFEIPTEKILSYIDQHADDAALILLPGIQYYTGQLFDIQKITEYAQSRGLVVGWDLAHAYGNVHLKLHDWNVDFAAWCTYKYGNAGPGAMAGLFVHERHGRVDYREGEDSPKFRHRLTGWYGGDKSVRFKMDNNFKPIPGAGGYQISNPSAIDLASLCAALSVFDETSMAELRRKSVLMTAYLEHLLLKDTTDESRLFDIITPSEPAARGAQLSLLLRPGLLHKVAQRLQEAGIICDKREPGVVRVAPVPLYNTFTEVWTFVEQLKAALEE.

Pyridoxal 5'-phosphate-binding positions include leucine 135, threonine 136, 163–166 (FPSD), aspartate 248, histidine 251, and tyrosine 273. Lysine 274 carries the N6-(pyridoxal phosphate)lysine modification. Positions 313 and 341 each coordinate pyridoxal 5'-phosphate.

The protein belongs to the kynureninase family. Homodimer. It depends on pyridoxal 5'-phosphate as a cofactor.

It is found in the cytoplasm. The enzyme catalyses L-kynurenine + H2O = anthranilate + L-alanine + H(+). It carries out the reaction 3-hydroxy-L-kynurenine + H2O = 3-hydroxyanthranilate + L-alanine + H(+). It functions in the pathway amino-acid degradation; L-kynurenine degradation; L-alanine and anthranilate from L-kynurenine: step 1/1. The protein operates within cofactor biosynthesis; NAD(+) biosynthesis; quinolinate from L-kynurenine: step 2/3. Catalyzes the cleavage of L-kynurenine (L-Kyn) and L-3-hydroxykynurenine (L-3OHKyn) into anthranilic acid (AA) and 3-hydroxyanthranilic acid (3-OHAA), respectively. This chain is Kynureninase 2 (bna5-2), found in Aspergillus clavatus (strain ATCC 1007 / CBS 513.65 / DSM 816 / NCTC 3887 / NRRL 1 / QM 1276 / 107).